We begin with the raw amino-acid sequence, 514 residues long: MKKSAYPIEIIQKQAPYHPDPTMIFNHLCESRSETLLLETADNKKKRSRKIMIIDSAMRISSEHNAVKLTPLSINGMEILLVLKKIISKKIEIYRRKKNTILIFPNIEKDLDEDKKLFSLSVFDAFRLIIKTFENREKKSKAMFFGGLFSYDLISVFETLPKLKGNQKCSNFCFYLAETLLVLDHQQKTCLIQSSLFTKNSNEKKRIEERSVEIKQKLNQKLNSIPKIKIKDINLTSNMNNFEYGSIIKKLQKLIQKGEIFQVVPSRKFYLPCPNPLSAYQKLKKSNPSPYMFFMQDQDFTLFGASPESSLKYDEKTRKIELYPIAGTRPRGRTKDGNLDLDLDSRIELEMRTNHKELAEHLMLVDLARNDLARICKPGSRYVSDLVRVDRYSHVMHLVSRVIGELREGLDALHAYASCMNMGTLTGAPKVCAMQLIAEYEKEKRGSYGGAIGYFTDLGNLDTCITIRSAYVEKRYCYNQAGAGIVYNSIPEDEVNESLNKAQAVINAIKNAHY.

L-tryptophan-binding positions include Thr40 and 290–292 (PYM). 327–328 (GT) is a binding site for chorismate. Glu360 provides a ligand contact to Mg(2+). Chorismate contacts are provided by residues Tyr448, Arg468, 482–484 (GAG), and Gly484. Mg(2+) is bound at residue Glu497.

The protein belongs to the anthranilate synthase component I family. In terms of assembly, heterotetramer consisting of two non-identical subunits: a beta subunit (TrpG) and a large alpha subunit (TrpE). Mg(2+) serves as cofactor.

The catalysed reaction is chorismate + L-glutamine = anthranilate + pyruvate + L-glutamate + H(+). It functions in the pathway amino-acid biosynthesis; L-tryptophan biosynthesis; L-tryptophan from chorismate: step 1/5. Its activity is regulated as follows. Feedback inhibited by tryptophan. Part of a heterotetrameric complex that catalyzes the two-step biosynthesis of anthranilate, an intermediate in the biosynthesis of L-tryptophan. In the first step, the glutamine-binding beta subunit (TrpG) of anthranilate synthase (AS) provides the glutamine amidotransferase activity which generates ammonia as a substrate that, along with chorismate, is used in the second step, catalyzed by the large alpha subunit of AS (TrpE) to produce anthranilate. In the absence of TrpG, TrpE can synthesize anthranilate directly from chorismate and high concentrations of ammonia. The protein is Anthranilate synthase component 1 (trpE) of Buchnera aphidicola subsp. Rhopalosiphum padi.